The following is a 186-amino-acid chain: Ribosome-recycling factor (186 aa).

The protein belongs to the RRF family.

The protein localises to the cytoplasm. Its function is as follows. Responsible for the release of ribosomes from messenger RNA at the termination of protein biosynthesis. May increase the efficiency of translation by recycling ribosomes from one round of translation to another. The sequence is that of Ribosome-recycling factor from Leifsonia xyli subsp. xyli (strain CTCB07).